Consider the following 202-residue polypeptide: Glycolipid transfer protein 1 (202 aa).

Residues D52, N56, W99, and H138 each coordinate a ganglioside GM3 (d18:1(4E)).

This sequence belongs to the GLTP family.

In terms of biological role, may be involved in glycolipids transfer. In Arabidopsis thaliana (Mouse-ear cress), this protein is Glycolipid transfer protein 1.